The following is a 702-amino-acid chain: NAD(P)H-quinone oxidoreductase subunit 5, chloroplastic (702 aa).

16 consecutive transmembrane segments (helical) span residues 7–27, 40–60, 91–111, 124–144, 147–167, 189–209, 224–244, 258–278, 289–309, 327–347, 354–374, 395–415, 427–447, 511–531, 562–582, and 680–700; these read YVWI…LGLI, SAIL…TVLW, PLSA…MIYT, FFAY…SPNL, VYAF…FWFT, LLLG…DIVA, VLLT…SAQF, TPIS…YLVA, LVMD…ATVA, LGYM…FHLI, ALLF…VGYN, GVTF…ACFW, KLPV…FYMF, IPLI…APLP, FAIT…IAWI, and IFVL…FNFF.

The protein belongs to the complex I subunit 5 family. As to quaternary structure, NDH is composed of at least 16 different subunits, 5 of which are encoded in the nucleus.

The protein localises to the plastid. Its subcellular location is the chloroplast thylakoid membrane. It carries out the reaction a plastoquinone + NADH + (n+1) H(+)(in) = a plastoquinol + NAD(+) + n H(+)(out). The enzyme catalyses a plastoquinone + NADPH + (n+1) H(+)(in) = a plastoquinol + NADP(+) + n H(+)(out). NDH shuttles electrons from NAD(P)H:plastoquinone, via FMN and iron-sulfur (Fe-S) centers, to quinones in the photosynthetic chain and possibly in a chloroplast respiratory chain. The immediate electron acceptor for the enzyme in this species is believed to be plastoquinone. Couples the redox reaction to proton translocation, and thus conserves the redox energy in a proton gradient. This is NAD(P)H-quinone oxidoreductase subunit 5, chloroplastic (ndhF) from Zygnema circumcarinatum (Green alga).